We begin with the raw amino-acid sequence, 149 residues long: 3-dehydroquinate dehydratase (149 aa).

The Proton acceptor role is filled by Tyr26. The substrate site is built by Asn77, His83, and Asp90. His103 functions as the Proton donor in the catalytic mechanism. Residues 104 to 105 and Arg114 each bind substrate; that span reads LS.

The protein belongs to the type-II 3-dehydroquinase family. As to quaternary structure, homododecamer.

It catalyses the reaction 3-dehydroquinate = 3-dehydroshikimate + H2O. It participates in metabolic intermediate biosynthesis; chorismate biosynthesis; chorismate from D-erythrose 4-phosphate and phosphoenolpyruvate: step 3/7. Functionally, catalyzes a trans-dehydration via an enolate intermediate. The protein is 3-dehydroquinate dehydratase of Haemophilus influenzae (strain PittGG).